Reading from the N-terminus, the 417-residue chain is NADH-quinone oxidoreductase subunit D (417 aa).

This sequence belongs to the complex I 49 kDa subunit family. In terms of assembly, NDH-1 is composed of 14 different subunits. Subunits NuoB, C, D, E, F, and G constitute the peripheral sector of the complex.

The protein resides in the cell inner membrane. The enzyme catalyses a quinone + NADH + 5 H(+)(in) = a quinol + NAD(+) + 4 H(+)(out). Functionally, NDH-1 shuttles electrons from NADH, via FMN and iron-sulfur (Fe-S) centers, to quinones in the respiratory chain. The immediate electron acceptor for the enzyme in this species is believed to be ubiquinone. Couples the redox reaction to proton translocation (for every two electrons transferred, four hydrogen ions are translocated across the cytoplasmic membrane), and thus conserves the redox energy in a proton gradient. The chain is NADH-quinone oxidoreductase subunit D from Burkholderia thailandensis (strain ATCC 700388 / DSM 13276 / CCUG 48851 / CIP 106301 / E264).